Reading from the N-terminus, the 376-residue chain is Queuine tRNA-ribosyltransferase (376 aa).

Asp90 serves as the catalytic Proton acceptor. Substrate is bound by residues 90–94, Asp144, Gln193, and Gly220; that span reads DSGGF. The RNA binding stretch occupies residues 251 to 257; sequence GVGTPED. The active-site Nucleophile is the Asp270. The segment at 275–279 is RNA binding; important for wobble base 34 recognition; it reads TRNAR. 4 residues coordinate Zn(2+): Cys308, Cys310, Cys313, and His339.

The protein belongs to the queuine tRNA-ribosyltransferase family. As to quaternary structure, homodimer. Within each dimer, one monomer is responsible for RNA recognition and catalysis, while the other monomer binds to the replacement base PreQ1. The cofactor is Zn(2+).

The enzyme catalyses 7-aminomethyl-7-carbaguanine + guanosine(34) in tRNA = 7-aminomethyl-7-carbaguanosine(34) in tRNA + guanine. It functions in the pathway tRNA modification; tRNA-queuosine biosynthesis. Its function is as follows. Catalyzes the base-exchange of a guanine (G) residue with the queuine precursor 7-aminomethyl-7-deazaguanine (PreQ1) at position 34 (anticodon wobble position) in tRNAs with GU(N) anticodons (tRNA-Asp, -Asn, -His and -Tyr). Catalysis occurs through a double-displacement mechanism. The nucleophile active site attacks the C1' of nucleotide 34 to detach the guanine base from the RNA, forming a covalent enzyme-RNA intermediate. The proton acceptor active site deprotonates the incoming PreQ1, allowing a nucleophilic attack on the C1' of the ribose to form the product. After dissociation, two additional enzymatic reactions on the tRNA convert PreQ1 to queuine (Q), resulting in the hypermodified nucleoside queuosine (7-(((4,5-cis-dihydroxy-2-cyclopenten-1-yl)amino)methyl)-7-deazaguanosine). The sequence is that of Queuine tRNA-ribosyltransferase from Campylobacter concisus (strain 13826).